The sequence spans 251 residues: Hydroxyacylglutathione hydrolase (251 aa).

H53, H55, D57, H58, H110, D127, and H165 together coordinate Zn(2+).

It belongs to the metallo-beta-lactamase superfamily. Glyoxalase II family. Monomer. Zn(2+) is required as a cofactor.

The enzyme catalyses an S-(2-hydroxyacyl)glutathione + H2O = a 2-hydroxy carboxylate + glutathione + H(+). Its pathway is secondary metabolite metabolism; methylglyoxal degradation; (R)-lactate from methylglyoxal: step 2/2. In terms of biological role, thiolesterase that catalyzes the hydrolysis of S-D-lactoyl-glutathione to form glutathione and D-lactic acid. The sequence is that of Hydroxyacylglutathione hydrolase from Buchnera aphidicola subsp. Acyrthosiphon pisum (strain APS) (Acyrthosiphon pisum symbiotic bacterium).